The chain runs to 146 residues: uncharacterized protein (146 aa).

This is an uncharacterized protein from Escherichia coli O157:H7.